The following is a 143-amino-acid chain: Ribonuclease H (143 aa).

The region spanning 1 to 136 is the RNase H type-1 domain; that stretch reads MQEIEIFCDG…CDSLAKLEAQ (136 aa). 4 residues coordinate Mg(2+): Asp9, Glu47, Asp69, and Asp128.

This sequence belongs to the RNase H family. Monomer. Requires Mg(2+) as cofactor.

The protein resides in the cytoplasm. It catalyses the reaction Endonucleolytic cleavage to 5'-phosphomonoester.. Endonuclease that specifically degrades the RNA of RNA-DNA hybrids. The chain is Ribonuclease H from Helicobacter pylori (strain HPAG1).